Here is a 207-residue protein sequence, read N- to C-terminus: dITP/XTP pyrophosphatase (207 aa).

8-13 (TNNKNK) serves as a coordination point for substrate. Catalysis depends on Asp-72, which acts as the Proton acceptor. Asp-72 contributes to the Mg(2+) binding site. Substrate contacts are provided by residues Ser-73, 157–160 (FGYD), Lys-180, and 185–186 (HR).

The protein belongs to the HAM1 NTPase family. Homodimer. The cofactor is Mg(2+).

It carries out the reaction XTP + H2O = XMP + diphosphate + H(+). The catalysed reaction is dITP + H2O = dIMP + diphosphate + H(+). It catalyses the reaction ITP + H2O = IMP + diphosphate + H(+). Its function is as follows. Pyrophosphatase that catalyzes the hydrolysis of nucleoside triphosphates to their monophosphate derivatives, with a high preference for the non-canonical purine nucleotides XTP (xanthosine triphosphate), dITP (deoxyinosine triphosphate) and ITP. Seems to function as a house-cleaning enzyme that removes non-canonical purine nucleotides from the nucleotide pool, thus preventing their incorporation into DNA/RNA and avoiding chromosomal lesions. The protein is dITP/XTP pyrophosphatase of Lactobacillus johnsonii (strain CNCM I-12250 / La1 / NCC 533).